Reading from the N-terminus, the 396-residue chain is MAKLDFDRSKEHVNIGTIGHVDHGKTTLTAAIATVLAKKGLSEAKSYDAIDNAPEEKARGITINTSHIEYNTEKRHYAHVDCPGHADYIKNMITGAAQMDGSILVVAATDGAMPQTKEHVLLAKQVGVPKMVVFLNKCDMIKPEDAEMIDLVEMEVRELLTKYGFDGDNTPFVRGSALQALQGKPEYEENILELMNAVDTWIETPVKDFEKPFLMAVEDVFTISGRGTVATGRVERGRLSLNEEVEIVGLKPTKKTVVTGIEMFRKNLKEAQAGDNAGLLLRGVERSAIERGQVLAKPGSIVPHAEFEAAIYALTKEEGGRHTPFFVNYKPQFYFRTTDVTGGLEFEKGREFVQPGENVNLKVKLIAPIAVEEGTKFSIREGGRTVGYGSVTKILK.

The 197-residue stretch at 10 to 206 (KEHVNIGTIG…AVDTWIETPV (197 aa)) folds into the tr-type G domain. Positions 19-26 (GHVDHGKT) are G1. Position 19–26 (19–26 (GHVDHGKT)) interacts with GTP. Position 26 (Thr-26) interacts with Mg(2+). The G2 stretch occupies residues 60–64 (GITIN). The tract at residues 81–84 (DCPG) is G3. Residues 81 to 85 (DCPGH) and 136 to 139 (NKCD) contribute to the GTP site. The interval 136–139 (NKCD) is G4. The tract at residues 176–178 (SAL) is G5.

Belongs to the TRAFAC class translation factor GTPase superfamily. Classic translation factor GTPase family. EF-Tu/EF-1A subfamily. As to quaternary structure, monomer.

It localises to the cytoplasm. It carries out the reaction GTP + H2O = GDP + phosphate + H(+). GTP hydrolase that promotes the GTP-dependent binding of aminoacyl-tRNA to the A-site of ribosomes during protein biosynthesis. The polypeptide is Elongation factor Tu (Mycoplasmopsis agalactiae (strain NCTC 10123 / CIP 59.7 / PG2) (Mycoplasma agalactiae)).